Consider the following 689-residue polypeptide: Beta-adrenergic receptor kinase 1 (689 aa).

An N-terminal region spans residues 1-190 (MADLEAVLAD…ELNIHLTMND (190 aa)). The 122-residue stretch at 54–175 (TFEKIFSQKL…IESDKFTRFC (122 aa)) folds into the RGS domain. Residues 191–453 (FSVHRIIGRG…AQEVKESPFF (263 aa)) enclose the Protein kinase domain. ATP is bound by residues 197-205 (IGRGGFGEV) and K220. D317 serves as the catalytic Proton acceptor. One can recognise an AGC-kinase C-terminal domain in the interval 454 to 521 (RSLDWQMVFL…TISERWQQEV (68 aa)). A PH domain is found at 558 to 652 (DCIMHGYMSK…WKKELRDAYR (95 aa)). At S670 the chain carries Phosphoserine.

The protein belongs to the protein kinase superfamily. AGC Ser/Thr protein kinase family. GPRK subfamily. Interacts with the heterodimer formed by GNB1 and GNG2. Interacts with GIT1. Interacts with, and phosphorylates chemokine-stimulated CCR5. Interacts with ARRB1. Interacts with LPAR1 and LPAR2. Interacts with RALA in response to LPAR1 activation. ADRBK1 and RALA mutually inhibit each other's binding to LPAR1. Interacts with ADRB2. Expressed in peripheral blood leukocytes.

It localises to the cytoplasm. It is found in the cell membrane. Its subcellular location is the postsynapse. The protein localises to the presynapse. It carries out the reaction [beta-adrenergic receptor] + ATP = [beta-adrenergic receptor]-phosphate + ADP + H(+). Its activity is regulated as follows. In contrast to other AGC family kinases, the catalytic activity is solely regulated by the binding of substrates and ligands, not by phosphorylation of the kinase domain. Its function is as follows. Specifically phosphorylates the agonist-occupied form of the beta-adrenergic and closely related receptors, probably inducing a desensitization of them. Key regulator of LPAR1 signaling. Competes with RALA for binding to LPAR1 thus affecting the signaling properties of the receptor. Desensitizes LPAR1 and LPAR2 in a phosphorylation-independent manner. Positively regulates ciliary smoothened (SMO)-dependent Hedgehog (Hh) signaling pathway by facilitating the trafficking of SMO into the cilium and the stimulation of SMO activity. Inhibits relaxation of airway smooth muscle in response to blue light. This is Beta-adrenergic receptor kinase 1 from Homo sapiens (Human).